The primary structure comprises 473 residues: Photosystem II CP43 reaction center protein (473 aa).

Residues 1–14 (MKTLYSLRRFYHVE) constitute a propeptide that is removed on maturation. Thr15 is modified (N-acetylthreonine). Residue Thr15 is modified to Phosphothreonine. The next 5 membrane-spanning stretches (helical) occupy residues 69-93 (LFEV…PHLA), 134-155 (LLGP…KDRN), 178-200 (KALY…RKIT), 255-275 (KPFA…LSYS), and 291-312 (WFNN…ASQA). Glu367 is a [CaMn4O5] cluster binding site. The helical transmembrane segment at 447–471 (RARAAAAGFEKGIDRDLEPVLFMTP) threads the bilayer.

This sequence belongs to the PsbB/PsbC family. PsbC subfamily. As to quaternary structure, PSII is composed of 1 copy each of membrane proteins PsbA, PsbB, PsbC, PsbD, PsbE, PsbF, PsbH, PsbI, PsbJ, PsbK, PsbL, PsbM, PsbT, PsbX, PsbY, PsbZ, Psb30/Ycf12, at least 3 peripheral proteins of the oxygen-evolving complex and a large number of cofactors. It forms dimeric complexes. The cofactor is Binds multiple chlorophylls and provides some of the ligands for the Ca-4Mn-5O cluster of the oxygen-evolving complex. It may also provide a ligand for a Cl- that is required for oxygen evolution. PSII binds additional chlorophylls, carotenoids and specific lipids..

It is found in the plastid. Its subcellular location is the chloroplast thylakoid membrane. In terms of biological role, one of the components of the core complex of photosystem II (PSII). It binds chlorophyll and helps catalyze the primary light-induced photochemical processes of PSII. PSII is a light-driven water:plastoquinone oxidoreductase, using light energy to abstract electrons from H(2)O, generating O(2) and a proton gradient subsequently used for ATP formation. The sequence is that of Photosystem II CP43 reaction center protein from Carica papaya (Papaya).